The primary structure comprises 359 residues: 5-amino-6-(D-ribitylamino)uracil--L-tyrosine 4-hydroxyphenyl transferase (359 aa).

Residues 45-282 (VTYVVNANIN…TYAISRIFFK (238 aa)) enclose the Radical SAM core domain. 3 residues coordinate [4Fe-4S] cluster: C59, C63, and C66.

This sequence belongs to the radical SAM superfamily. CofH family. Consists of two subunits, CofG and CofH. The cofactor is [4Fe-4S] cluster.

The catalysed reaction is 5-amino-6-(D-ribitylamino)uracil + L-tyrosine + S-adenosyl-L-methionine = 5-amino-5-(4-hydroxybenzyl)-6-(D-ribitylimino)-5,6-dihydrouracil + 2-iminoacetate + 5'-deoxyadenosine + L-methionine + H(+). It participates in cofactor biosynthesis; coenzyme F0 biosynthesis. In terms of biological role, catalyzes the radical-mediated synthesis of 5-amino-5-(4-hydroxybenzyl)-6-(D-ribitylimino)-5,6-dihydrouracil from 5-amino-6-(D-ribitylamino)uracil and L-tyrosine. The sequence is that of 5-amino-6-(D-ribitylamino)uracil--L-tyrosine 4-hydroxyphenyl transferase from Methanococcus maripaludis (strain C5 / ATCC BAA-1333).